Consider the following 465-residue polypeptide: tRNA modification GTPase MnmE (465 aa).

3 residues coordinate (6S)-5-formyl-5,6,7,8-tetrahydrofolate: R25, E87, and R126. In terms of domain architecture, TrmE-type G spans 222 to 386 (TIRVVLRGLP…LIERLVQFAE (165 aa)). GTP-binding positions include 232–237 (NAGKSR), 251–257 (TDQAGTT), and 276–279 (DTAG). Residues S236 and T257 each contribute to the Mg(2+) site. K465 contributes to the (6S)-5-formyl-5,6,7,8-tetrahydrofolate binding site.

Belongs to the TRAFAC class TrmE-Era-EngA-EngB-Septin-like GTPase superfamily. TrmE GTPase family. Homodimer. Heterotetramer of two MnmE and two MnmG subunits. It depends on K(+) as a cofactor.

It is found in the cytoplasm. Its function is as follows. Exhibits a very high intrinsic GTPase hydrolysis rate. Involved in the addition of a carboxymethylaminomethyl (cmnm) group at the wobble position (U34) of certain tRNAs, forming tRNA-cmnm(5)s(2)U34. The polypeptide is tRNA modification GTPase MnmE (Rhodopirellula baltica (strain DSM 10527 / NCIMB 13988 / SH1)).